The primary structure comprises 922 residues: Two-component sensor PprA (922 aa).

The span at 1–10 (MFEFSRSSSA) shows a compositional bias: low complexity. The segment at 1–22 (MFEFSRSSSAEAERPEPFSQEG) is disordered. Residues 506–558 (VKTRYRLADGQGNWHWLYDEAKLLRDAQGLPSEAVGLWLDVTEQHLAAQRIAE) enclose the PAC 1 domain. Positions 559-622 (SEERYRVLVE…EDASALRARL (64 aa)) constitute a PAS domain. The PAC 2 domain maps to 632–684 (EVPELRFNLPGQRFLWLVWAERPLFDARGELCEVQAVGRDNTPVRRAQQQLAQ). The Histidine kinase domain maps to 697 to 916 (GLAHEVKQPL…LFVVRLPLAA (220 aa)). H700 carries the post-translational modification Phosphohistidine; by autocatalysis.

Post-translationally, autophosphorylated.

The catalysed reaction is ATP + protein L-histidine = ADP + protein N-phospho-L-histidine.. Member of the two-component regulatory system PprA/PprB involved in biofilm formation by controlling the expression of many related genes including type IVb pili major subunit flp pilin, adhesin bapA or cupE fimbriae. Functions as a heme sensor histidine kinase which is autophosphorylated at a histidine residue and transfers its phosphate group to PprB. This is Two-component sensor PprA from Pseudomonas aeruginosa (strain ATCC 15692 / DSM 22644 / CIP 104116 / JCM 14847 / LMG 12228 / 1C / PRS 101 / PAO1).